We begin with the raw amino-acid sequence, 324 residues long: MIQEKAIIIGGGPCGLSAAIHLKQIGIDALVIEKGNVVNSIYNYPTHQTFFSSSEKLEIGDVAFITENRKPVRIQALSYYREVVKRKNIRVNAFEMVRKVTKTQNNTFVIETSKETYTTPYCIIATGYYDHPNYMGVPGEDLPKVFHYFKEGHPYFDKDVVVIGGKNSSVDAALELVKSGARVTVLYRGNEYSPSIKPWILPEFEALVRNGTIRMEFGACVEKITENEVVFRSGEKELITIKNDFVFAMTGYHPDHQFLEKIGVEIDKETGRPFFNEETMETNVEGVFIAGVIAAGNNANEIFIENGRFHGGHIAAEIAKRENH.

Residue C220 is modified to S-bacillithiol cysteine disulfide.

In terms of assembly, interacts with BrxC. FAD is required as a cofactor. In terms of processing, C-terminal Cys can react with bacillithiol (BSH) to form mixed disulfides. S-bacillithiolation protects Cys residues against overoxidation by acting as a redox switch in response to oxidative stress.

In terms of biological role, S-bacillithiolation is the formation of mixed disulfide bonds between protein thiols and the general thiol reductant bacillithiol (BSH) under oxidative stress. BSH is an equivalent of glutathione (GSH) in Firmicutes. This protein is a NADPH-dependent bacilliredoxin reductase, which debacillithiolates (removes BSH) the S-bacillithiolated BrxB (BrxB-SSB), and to a lesser extent BrxC (BrxC-SSB). Involved in a redox cascade increasing the efficacy of BrxB function by reducing BrxB-SSB and thus reactivating it. Has NADPH-dependent oxidase activity under aerobic conditions producing hydrogen peroxide (H(2)O(2)). The polypeptide is Bacilliredoxin reductase Bdr (Bacillus subtilis (strain 168)).